Consider the following 326-residue polypeptide: N-acetyl-gamma-glutamyl-phosphate reductase (326 aa).

C155 is a catalytic residue.

It belongs to the NAGSA dehydrogenase family. Type 1 subfamily.

The protein resides in the cytoplasm. It catalyses the reaction N-acetyl-L-glutamate 5-semialdehyde + phosphate + NADP(+) = N-acetyl-L-glutamyl 5-phosphate + NADPH + H(+). The protein operates within amino-acid biosynthesis; L-arginine biosynthesis; N(2)-acetyl-L-ornithine from L-glutamate: step 3/4. In terms of biological role, catalyzes the NADPH-dependent reduction of N-acetyl-5-glutamyl phosphate to yield N-acetyl-L-glutamate 5-semialdehyde. This Shewanella baltica (strain OS223) protein is N-acetyl-gamma-glutamyl-phosphate reductase.